The primary structure comprises 327 residues: Serine/threonine-protein phosphatase alpha-1 isoform (327 aa).

Residues Asp62, His64, Asp90, and Asn122 each contribute to the Mn(2+) site. The active-site Proton donor is the His123. Positions 171 and 246 each coordinate Mn(2+). Positions Gly308–Lys327 are disordered. Thr315 carries the post-translational modification Phosphothreonine.

This sequence belongs to the PPP phosphatase family. PP-1 subfamily. Interacts with Nop17l. It depends on Mn(2+) as a cofactor.

The catalysed reaction is O-phospho-L-seryl-[protein] + H2O = L-seryl-[protein] + phosphate. It carries out the reaction O-phospho-L-threonyl-[protein] + H2O = L-threonyl-[protein] + phosphate. The polypeptide is Serine/threonine-protein phosphatase alpha-1 isoform (Pp1alpha-96A) (Drosophila melanogaster (Fruit fly)).